Here is a 374-residue protein sequence, read N- to C-terminus: 3-dehydroquinate synthase (374 aa).

It belongs to the archaeal-type DHQ synthase family.

It catalyses the reaction 2-amino-2,3,7-trideoxy-D-lyxo-hept-6-ulosonate + NAD(+) + H2O = 3-dehydroquinate + NH4(+) + NADH + H(+). Functionally, catalyzes the oxidative deamination and cyclization of 2-amino-3,7-dideoxy-D-threo-hept-6-ulosonic acid (ADH) to yield 3-dehydroquinate (DHQ), which is fed into the canonical shikimic pathway of aromatic amino acid biosynthesis. The protein is 3-dehydroquinate synthase of Methanocella arvoryzae (strain DSM 22066 / NBRC 105507 / MRE50).